The following is a 107-amino-acid chain: UPF0145 protein ETA_21660 (107 aa).

The protein belongs to the UPF0145 family.

This Erwinia tasmaniensis (strain DSM 17950 / CFBP 7177 / CIP 109463 / NCPPB 4357 / Et1/99) protein is UPF0145 protein ETA_21660.